The chain runs to 298 residues: 4-diphosphocytidyl-2-C-methyl-D-erythritol kinase (298 aa).

Lysine 15 is an active-site residue. 100-110 lines the ATP pocket; it reads PIAAGIGGGSA. The active site involves aspartate 142.

This sequence belongs to the GHMP kinase family. IspE subfamily.

It carries out the reaction 4-CDP-2-C-methyl-D-erythritol + ATP = 4-CDP-2-C-methyl-D-erythritol 2-phosphate + ADP + H(+). Its pathway is isoprenoid biosynthesis; isopentenyl diphosphate biosynthesis via DXP pathway; isopentenyl diphosphate from 1-deoxy-D-xylulose 5-phosphate: step 3/6. Functionally, catalyzes the phosphorylation of the position 2 hydroxy group of 4-diphosphocytidyl-2C-methyl-D-erythritol. This chain is 4-diphosphocytidyl-2-C-methyl-D-erythritol kinase, found in Rhodopseudomonas palustris (strain BisA53).